Reading from the N-terminus, the 581-residue chain is MADADSANPQFLEWVKEWLDLARERNSKGVTTYRTAYNSLKACPISFEHPAQLQQLKGFGPKLCERLEQQLKKHCEQNGLPMPPHPRSRKAAPVTSDENGEGSSKPAKKARKQKAYVPALRSGAFALVVGLSTLDEDTATGMTKAELIEVAQPYCDASFSAPSDPTKFYTAWNSMKTLLQKELVYERGRPLRRYALTDEGWEVAKRIKDTDHWQAEKDRTKDPTSAQPVIPNFQPGAISRQKSPSVEIAEPAQALSEYQNVVADGLTTSDDASLPNFTPILLPPGTFTVQLVLDVREVRAKTDRDYMQEELAKQGAKPIMRSMELGDAQWVAKCNDPNLLSSQGAEGDEVVLDWIVERKRLDDLIGSIKDGRFHEQKFRLQRSGVKKVIYIIEEIGMDPEVINRYAEAVRSAIASTQVVNGYFVKRTNKMDDTIRYLTRMTAMLKRTYESRSLHVIPTKVLTSQNYLPLLKHLRESISPDWYITYPAFSSLASKSESITLRDVFLKMLMTIKGVTGEKALEIQKCWKTPYDFVKAFEACGPGEQGLKRKRELVFSQTSHLVGRKKFTKPLSTKIAEVWGNT.

Residues 76–113 (EQNGLPMPPHPRSRKAAPVTSDENGEGSSKPAKKARKQ) are disordered. Residues 290 to 396 (QLVLDVREVR…KVIYIIEEIG (107 aa)) form the ERCC4 domain.

It belongs to the XPF family. Interacts with EME1. It depends on Mg(2+) as a cofactor.

It is found in the nucleus. Its function is as follows. Interacts with EME1 to form a DNA structure-specific endonuclease with substrate preference for branched DNA structures with a 5'-end at the branch nick. Typical substrates include 3'-flap structures, D-loops, replication forks and nicked Holliday junctions. May be required in mitosis for the processing of stalled or collapsed replication fork intermediates. May be required in meiosis for the repair of meiosis-specific double strand breaks subsequent to single-end invasion (SEI). This is Crossover junction endonuclease MUS81 (MUS81) from Gibberella zeae (strain ATCC MYA-4620 / CBS 123657 / FGSC 9075 / NRRL 31084 / PH-1) (Wheat head blight fungus).